A 282-amino-acid polypeptide reads, in one-letter code: 4-hydroxy-3-methylbut-2-enyl diphosphate reductase (282 aa).

Cysteine 12 serves as a coordination point for [4Fe-4S] cluster. (2E)-4-hydroxy-3-methylbut-2-enyl diphosphate is bound by residues histidine 40 and histidine 72. Positions 40 and 72 each coordinate dimethylallyl diphosphate. Isopentenyl diphosphate is bound by residues histidine 40 and histidine 72. Cysteine 94 lines the [4Fe-4S] cluster pocket. Histidine 122 lines the (2E)-4-hydroxy-3-methylbut-2-enyl diphosphate pocket. Residue histidine 122 participates in dimethylallyl diphosphate binding. Histidine 122 is a binding site for isopentenyl diphosphate. Residue glutamate 124 is the Proton donor of the active site. Threonine 160 provides a ligand contact to (2E)-4-hydroxy-3-methylbut-2-enyl diphosphate. Cysteine 188 contacts [4Fe-4S] cluster. Positions 216, 218, and 260 each coordinate (2E)-4-hydroxy-3-methylbut-2-enyl diphosphate. Positions 216, 218, and 260 each coordinate dimethylallyl diphosphate. 3 residues coordinate isopentenyl diphosphate: serine 216, asparagine 218, and serine 260.

This sequence belongs to the IspH family. The cofactor is [4Fe-4S] cluster.

It catalyses the reaction isopentenyl diphosphate + 2 oxidized [2Fe-2S]-[ferredoxin] + H2O = (2E)-4-hydroxy-3-methylbut-2-enyl diphosphate + 2 reduced [2Fe-2S]-[ferredoxin] + 2 H(+). It carries out the reaction dimethylallyl diphosphate + 2 oxidized [2Fe-2S]-[ferredoxin] + H2O = (2E)-4-hydroxy-3-methylbut-2-enyl diphosphate + 2 reduced [2Fe-2S]-[ferredoxin] + 2 H(+). It participates in isoprenoid biosynthesis; dimethylallyl diphosphate biosynthesis; dimethylallyl diphosphate from (2E)-4-hydroxy-3-methylbutenyl diphosphate: step 1/1. It functions in the pathway isoprenoid biosynthesis; isopentenyl diphosphate biosynthesis via DXP pathway; isopentenyl diphosphate from 1-deoxy-D-xylulose 5-phosphate: step 6/6. Catalyzes the conversion of 1-hydroxy-2-methyl-2-(E)-butenyl 4-diphosphate (HMBPP) into a mixture of isopentenyl diphosphate (IPP) and dimethylallyl diphosphate (DMAPP). Acts in the terminal step of the DOXP/MEP pathway for isoprenoid precursor biosynthesis. This Geotalea uraniireducens (strain Rf4) (Geobacter uraniireducens) protein is 4-hydroxy-3-methylbut-2-enyl diphosphate reductase.